Consider the following 475-residue polypeptide: Aminodeoxychorismate synthase component 1 (475 aa).

It belongs to the anthranilate synthase component I family. In terms of assembly, monomer. Heterodimer consisting of two non-identical subunits: a glutamine amidotransferase subunit (PabA) and a aminodeoxychorismate synthase subunit (PabB). Mg(2+) serves as cofactor.

The catalysed reaction is chorismate + L-glutamine = 4-amino-4-deoxychorismate + L-glutamate. The protein operates within cofactor biosynthesis; tetrahydrofolate biosynthesis; 4-aminobenzoate from chorismate: step 1/2. Functionally, part of a heterodimeric complex that catalyzes the two-step biosynthesis of 4-amino-4-deoxychorismate (ADC), a precursor of p-aminobenzoate (PABA) and tetrahydrofolate. In the first step, a glutamine amidotransferase (PabA) generates ammonia as a substrate that, along with chorismate, is used in the second step, catalyzed by aminodeoxychorismate synthase (PabB) to produce ADC. This chain is Aminodeoxychorismate synthase component 1 (pabB), found in Streptomyces lividans.